Reading from the N-terminus, the 131-residue chain is Small ribosomal subunit protein uS8 (131 aa).

Belongs to the universal ribosomal protein uS8 family. As to quaternary structure, part of the 30S ribosomal subunit. Contacts proteins S5 and S12.

One of the primary rRNA binding proteins, it binds directly to 16S rRNA central domain where it helps coordinate assembly of the platform of the 30S subunit. The polypeptide is Small ribosomal subunit protein uS8 (Bacteroides fragilis (strain ATCC 25285 / DSM 2151 / CCUG 4856 / JCM 11019 / LMG 10263 / NCTC 9343 / Onslow / VPI 2553 / EN-2)).